Consider the following 247-residue polypeptide: Probable transcriptional regulatory protein GAU_0635 (247 aa).

This sequence belongs to the TACO1 family.

The protein localises to the cytoplasm. The chain is Probable transcriptional regulatory protein GAU_0635 from Gemmatimonas aurantiaca (strain DSM 14586 / JCM 11422 / NBRC 100505 / T-27).